The following is a 366-amino-acid chain: Anhydro-N-acetylmuramic acid kinase (366 aa).

Residue 15–22 participates in ATP binding; the sequence is GTSLDGVD.

Belongs to the anhydro-N-acetylmuramic acid kinase family.

It carries out the reaction 1,6-anhydro-N-acetyl-beta-muramate + ATP + H2O = N-acetyl-D-muramate 6-phosphate + ADP + H(+). The protein operates within amino-sugar metabolism; 1,6-anhydro-N-acetylmuramate degradation. It participates in cell wall biogenesis; peptidoglycan recycling. In terms of biological role, catalyzes the specific phosphorylation of 1,6-anhydro-N-acetylmuramic acid (anhMurNAc) with the simultaneous cleavage of the 1,6-anhydro ring, generating MurNAc-6-P. Is required for the utilization of anhMurNAc either imported from the medium or derived from its own cell wall murein, and thus plays a role in cell wall recycling. The sequence is that of Anhydro-N-acetylmuramic acid kinase from Hydrogenovibrio crunogenus (strain DSM 25203 / XCL-2) (Thiomicrospira crunogena).